A 63-amino-acid chain; its full sequence is ATP synthase F(0) complex subunit 8 (63 aa).

Residues Thr8–Phe24 form a helical membrane-spanning segment. Lys57 is modified (N6-acetyllysine).

It belongs to the ATPase protein 8 family. Component of the ATP synthase complex composed at least of ATP5F1A/subunit alpha, ATP5F1B/subunit beta, ATP5MC1/subunit c (homooctomer), MT-ATP6/subunit a, MT-ATP8/subunit 8, ATP5ME/subunit e, ATP5MF/subunit f, ATP5MG/subunit g, ATP5MK/subunit k, ATP5MJ/subunit j, ATP5F1C/subunit gamma, ATP5F1D/subunit delta, ATP5F1E/subunit epsilon, ATP5PF/subunit F6, ATP5PB/subunit b, ATP5PD/subunit d, ATP5PO/subunit OSCP. ATP synthase complex consists of a soluble F(1) head domain (subunits alpha(3) and beta(3)) - the catalytic core - and a membrane F(0) domain - the membrane proton channel (subunits c, a, 8, e, f, g, k and j). These two domains are linked by a central stalk (subunits gamma, delta, and epsilon) rotating inside the F1 region and a stationary peripheral stalk (subunits F6, b, d, and OSCP). Interacts with PRICKLE3.

The protein localises to the mitochondrion membrane. Its function is as follows. Subunit 8, of the mitochondrial membrane ATP synthase complex (F(1)F(0) ATP synthase or Complex V) that produces ATP from ADP in the presence of a proton gradient across the membrane which is generated by electron transport complexes of the respiratory chain. ATP synthase complex consist of a soluble F(1) head domain - the catalytic core - and a membrane F(1) domain - the membrane proton channel. These two domains are linked by a central stalk rotating inside the F(1) region and a stationary peripheral stalk. During catalysis, ATP synthesis in the catalytic domain of F(1) is coupled via a rotary mechanism of the central stalk subunits to proton translocation. In vivo, can only synthesize ATP although its ATP hydrolase activity can be activated artificially in vitro. Part of the complex F(0) domain. This is ATP synthase F(0) complex subunit 8 from Balaenoptera musculus (Blue whale).